Reading from the N-terminus, the 365-residue chain is Eukaryotic translation initiation factor 3 subunit H (365 aa).

The MPN domain occupies 11-160 (VKVEALVVMK…LRAFRLSPKF (150 aa)).

It belongs to the eIF-3 subunit H family. Component of the eukaryotic translation initiation factor 3 (eIF-3) complex.

It localises to the cytoplasm. Component of the eukaryotic translation initiation factor 3 (eIF-3) complex, which is involved in protein synthesis of a specialized repertoire of mRNAs and, together with other initiation factors, stimulates binding of mRNA and methionyl-tRNAi to the 40S ribosome. The eIF-3 complex specifically targets and initiates translation of a subset of mRNAs involved in cell proliferation. This is Eukaryotic translation initiation factor 3 subunit H from Aspergillus fumigatus (strain CBS 144.89 / FGSC A1163 / CEA10) (Neosartorya fumigata).